Reading from the N-terminus, the 135-residue chain is S-protein homolog 20 (135 aa).

The first 26 residues, 1–26, serve as a signal peptide directing secretion; the sequence is MNGSSAFHIILSVTFMVFLFGGLCEA. N-linked (GlcNAc...) asparagine glycosylation occurs at asparagine 88.

The protein belongs to the plant self-incompatibility (S1) protein family.

The protein localises to the secreted. The sequence is that of S-protein homolog 20 from Arabidopsis thaliana (Mouse-ear cress).